The primary structure comprises 217 residues: Large ribosomal subunit protein uL1 (217 aa).

Serine 2 is modified (N-acetylserine). At tyrosine 11 the chain carries Phosphotyrosine. Residues lysine 91 and lysine 106 each carry the N6-acetyllysine modification. Residue lysine 118 is modified to N6-acetyllysine; alternate. A Glycyl lysine isopeptide (Lys-Gly) (interchain with G-Cter in SUMO1); alternate cross-link involves residue lysine 118. Lysine 118 participates in a covalent cross-link: Glycyl lysine isopeptide (Lys-Gly) (interchain with G-Cter in SUMO2); alternate. A Glycyl lysine isopeptide (Lys-Gly) (interchain with G-Cter in SUMO2) cross-link involves residue lysine 161.

The protein belongs to the universal ribosomal protein uL1 family. Component of the large ribosomal subunit.

Its subcellular location is the cytoplasm. In terms of biological role, component of the large ribosomal subunit. The ribosome is a large ribonucleoprotein complex responsible for the synthesis of proteins in the cell. This chain is Large ribosomal subunit protein uL1 (RPL10A), found in Bos taurus (Bovine).